The following is a 260-amino-acid chain: Indole-3-glycerol phosphate synthase (260 aa).

This sequence belongs to the TrpC family.

It carries out the reaction 1-(2-carboxyphenylamino)-1-deoxy-D-ribulose 5-phosphate + H(+) = (1S,2R)-1-C-(indol-3-yl)glycerol 3-phosphate + CO2 + H2O. The protein operates within amino-acid biosynthesis; L-tryptophan biosynthesis; L-tryptophan from chorismate: step 4/5. This Chloroherpeton thalassium (strain ATCC 35110 / GB-78) protein is Indole-3-glycerol phosphate synthase.